The sequence spans 468 residues: ATP synthase subunit beta 1 (468 aa).

151-158 (GGAGVGKT) provides a ligand contact to ATP.

It belongs to the ATPase alpha/beta chains family. As to quaternary structure, F-type ATPases have 2 components, CF(1) - the catalytic core - and CF(0) - the membrane proton channel. CF(1) has five subunits: alpha(3), beta(3), gamma(1), delta(1), epsilon(1). CF(0) has three main subunits: a(1), b(2) and c(9-12). The alpha and beta chains form an alternating ring which encloses part of the gamma chain. CF(1) is attached to CF(0) by a central stalk formed by the gamma and epsilon chains, while a peripheral stalk is formed by the delta and b chains.

Its subcellular location is the cell inner membrane. It carries out the reaction ATP + H2O + 4 H(+)(in) = ADP + phosphate + 5 H(+)(out). Produces ATP from ADP in the presence of a proton gradient across the membrane. The catalytic sites are hosted primarily by the beta subunits. The sequence is that of ATP synthase subunit beta 1 from Photobacterium profundum (strain SS9).